We begin with the raw amino-acid sequence, 172 residues long: Adenine phosphoribosyltransferase (172 aa).

Belongs to the purine/pyrimidine phosphoribosyltransferase family. In terms of assembly, homodimer.

It localises to the cytoplasm. It carries out the reaction AMP + diphosphate = 5-phospho-alpha-D-ribose 1-diphosphate + adenine. It participates in purine metabolism; AMP biosynthesis via salvage pathway; AMP from adenine: step 1/1. Functionally, catalyzes a salvage reaction resulting in the formation of AMP, that is energically less costly than de novo synthesis. The sequence is that of Adenine phosphoribosyltransferase from Nostoc punctiforme (strain ATCC 29133 / PCC 73102).